Here is a 179-residue protein sequence, read N- to C-terminus: Large ribosomal subunit protein uL5 (179 aa).

It belongs to the universal ribosomal protein uL5 family. As to quaternary structure, part of the 50S ribosomal subunit; part of the 5S rRNA/L5/L18/L25 subcomplex. Contacts the 5S rRNA and the P site tRNA. Forms a bridge to the 30S subunit in the 70S ribosome.

This is one of the proteins that bind and probably mediate the attachment of the 5S RNA into the large ribosomal subunit, where it forms part of the central protuberance. In the 70S ribosome it contacts protein S13 of the 30S subunit (bridge B1b), connecting the 2 subunits; this bridge is implicated in subunit movement. Contacts the P site tRNA; the 5S rRNA and some of its associated proteins might help stabilize positioning of ribosome-bound tRNAs. This chain is Large ribosomal subunit protein uL5, found in Nitratidesulfovibrio vulgaris (strain ATCC 29579 / DSM 644 / CCUG 34227 / NCIMB 8303 / VKM B-1760 / Hildenborough) (Desulfovibrio vulgaris).